Consider the following 580-residue polypeptide: UPF0329 protein ECU06_0080 (580 aa).

A compositionally biased stretch (basic and acidic residues) spans 308-330; the sequence is RQKRREREMEKSMKELLRDEEKA. Residues 308-384 form a disordered region; that stretch reads RQKRREREME…KTGKKSKGGR (77 aa). The span at 331–340 shows a compositional bias: basic residues; it reads KSKKGRKKKS. Acidic residues predominate over residues 351-363; sequence SETEEVEASEEME. Positions 372 to 384 are enriched in basic residues; it reads ARRKTGKKSKGGR.

It belongs to the UPF0329 family.

This Encephalitozoon cuniculi (strain GB-M1) (Microsporidian parasite) protein is UPF0329 protein ECU06_0080.